Here is a 598-residue protein sequence, read N- to C-terminus: NADH-quinone oxidoreductase subunit C/D (598 aa).

The tract at residues 1–189 is NADH dehydrogenase I subunit C; the sequence is MTDSTTHDRE…DPFELTRQKQ (189 aa). Positions 213-598 are NADH dehydrogenase I subunit D; it reads DFMFLNLGPN…IDFVMSDVDR (386 aa).

The protein in the N-terminal section; belongs to the complex I 30 kDa subunit family. In the C-terminal section; belongs to the complex I 49 kDa subunit family. NDH-1 is composed of 13 different subunits. Subunits NuoB, CD, E, F, and G constitute the peripheral sector of the complex.

It is found in the cell inner membrane. The enzyme catalyses a quinone + NADH + 5 H(+)(in) = a quinol + NAD(+) + 4 H(+)(out). NDH-1 shuttles electrons from NADH, via FMN and iron-sulfur (Fe-S) centers, to quinones in the respiratory chain. The immediate electron acceptor for the enzyme in this species is believed to be ubiquinone. Couples the redox reaction to proton translocation (for every two electrons transferred, four hydrogen ions are translocated across the cytoplasmic membrane), and thus conserves the redox energy in a proton gradient. This chain is NADH-quinone oxidoreductase subunit C/D, found in Edwardsiella ictaluri (strain 93-146).